The following is a 117-amino-acid chain: Large ribosomal subunit protein uL18 (117 aa).

It belongs to the universal ribosomal protein uL18 family. Part of the 50S ribosomal subunit; part of the 5S rRNA/L5/L18/L25 subcomplex. Contacts the 5S and 23S rRNAs.

In terms of biological role, this is one of the proteins that bind and probably mediate the attachment of the 5S RNA into the large ribosomal subunit, where it forms part of the central protuberance. The protein is Large ribosomal subunit protein uL18 of Sodalis glossinidius (strain morsitans).